A 107-amino-acid polypeptide reads, in one-letter code: MNKKELFDAFDGFSQNLMVTLAEIEAMKKQVQGLVEENTILRLENTKLRERLSQLEHENLAKTSSKQGKDHLEGIYDEGFHICNFFYGQRRENDEECMFCRELLDRK.

Residues His81, Cys83, Cys97, and Cys100 each coordinate Zn(2+).

This sequence belongs to the YabA family. As to quaternary structure, homotetramer. Interacts with both DnaA and DnaN, acting as a bridge between these two proteins. Requires Zn(2+) as cofactor.

The protein resides in the cytoplasm. It localises to the nucleoid. In terms of biological role, involved in control of chromosome replication initiation. Inhibits the cooperative binding of DnaA to the oriC region, thus negatively regulating initiation of chromosome replication. Inhibits the ability of DnaA-ATP to form a helix on DNA; does not disassemble preformed DnaA-DNA helices. Decreases the residence time of DnaA on the chromosome at its binding sites (oriC, replication forks and promoter-binding sites). Tethers DnaA to the replication machinery via the DNA polymerase beta sliding clamp subunit (dnaN). Associates with oriC and other DnaA targets on the chromosome in a DnaA-dependent manner. The protein is Replication initiation control protein YabA of Streptococcus equi subsp. equi (strain 4047).